A 159-amino-acid chain; its full sequence is Vasotocin-neurophysin VT (159 aa).

Positions 1-17 are cleaved as a signal peptide; that stretch reads TAPVPACFLCLLALSSA. An intrachain disulfide couples Cys-18 to Cys-23. Gly-26 carries the glycine amide modification. Intrachain disulfides connect Cys-39–Cys-83, Cys-42–Cys-56, Cys-50–Cys-73, Cys-57–Cys-63, Cys-90–Cys-102, Cys-96–Cys-114, and Cys-103–Cys-108. A glycan (N-linked (GlcNAc...) asparagine) is linked at Asn-129.

It belongs to the vasopressin/oxytocin family. In terms of processing, seven disulfide bonds are present in neurophysin.

The protein resides in the secreted. Functionally, vasotocin is an antidiuretic hormone. The polypeptide is Vasotocin-neurophysin VT (Bufo japonicus (Japanese common toad)).